Consider the following 511-residue polypeptide: ATP synthase subunit alpha (511 aa).

169-176 (GDRQTGKT) serves as a coordination point for ATP.

The protein belongs to the ATPase alpha/beta chains family. In terms of assembly, F-type ATPases have 2 components, CF(1) - the catalytic core - and CF(0) - the membrane proton channel. CF(1) has five subunits: alpha(3), beta(3), gamma(1), delta(1), epsilon(1). CF(0) has three main subunits: a(1), b(2) and c(9-12). The alpha and beta chains form an alternating ring which encloses part of the gamma chain. CF(1) is attached to CF(0) by a central stalk formed by the gamma and epsilon chains, while a peripheral stalk is formed by the delta and b chains.

The protein resides in the cell inner membrane. It carries out the reaction ATP + H2O + 4 H(+)(in) = ADP + phosphate + 5 H(+)(out). In terms of biological role, produces ATP from ADP in the presence of a proton gradient across the membrane. The alpha chain is a regulatory subunit. This is ATP synthase subunit alpha from Bartonella bacilliformis (strain ATCC 35685 / KC583 / Herrer 020/F12,63).